The chain runs to 588 residues: MTTEGLVVPALSTQQDDSTFEFDKVCSKTVVRSHLGLPNDATDDQVIKRIREYYNISEICNFLKQKVEGHELDMIPKYKHVTLQFPDSLICDSASIVHELQRELGLMPRTEDSSEVKCSADSCCKTGKVESPLSQKLWILADTSYSSCCIDEVAAGHVNSDLVIHFGDACLNVVESLPAAYVFGKPSLKLDSVITQFKEIYANRDSKILIMADAPHTQSLNQLYNILKPEYPNLAYADLYLNPSSNASIIGYDPCPSQSSILNVLNRTIIGLDNGDIDTDIDTILLEHDLFHIEVPAVPRLLQLTTRFQSVTTFEPKSGLASQGPYPKLMRRYRYMHMARSAGTVGLLVNTLSLANTKTLINKIGQKIKEAGKKHYVFVVGKPNVAKLANFENIDIWCVLGCDHQGIIIDENNEYYKPIVTPYELLLALNKDQNWSGKWVTDFNKVLEDMSLEDERNKQEINDGSDNNEEDSDDEAPEFNPVTGQYVSTSKPLRKLHHLQISSQEQHPELDNEGSQDLVKKFSSAVAIKDTVSTSAMHLQTRHWTGLGSDFQQNDSDEEANNEDGALVEDGRAGIARGYDYDRETKFQ.

The [4Fe-4S] cluster site is built by Cys149, Cys170, and Cys402. 2 disordered regions span residues 454 to 485 (DERN…VTGQ) and 546 to 588 (GLGS…TKFQ). Over residues 466–477 (DNNEEDSDDEAP) the composition is skewed to acidic residues. The segment covering 579-588 (YDYDRETKFQ) has biased composition (basic and acidic residues).

The protein belongs to the DPH1/DPH2 family. DPH2 subfamily. Component of the 2-(3-amino-3-carboxypropyl)histidine synthase complex composed of DPH1, DPH2, DPH3 and a NADH-dependent reductase, predominantly CBR1. [4Fe-4S] cluster is required as a cofactor.

Its subcellular location is the cytoplasm. It participates in protein modification; peptidyl-diphthamide biosynthesis. In terms of biological role, required for the first step of diphthamide biosynthesis, a post-translational modification of histidine which occurs in elongation factor 2. DPH1 and DPH2 transfer a 3-amino-3-carboxypropyl (ACP) group from S-adenosyl-L-methionine (SAM) to a histidine residue, the reaction is assisted by a reduction system comprising DPH3 and a NADH-dependent reductase, predominantly CBR1. Facilitates the reduction of the catalytic iron-sulfur cluster found in the DPH1 subunit. The protein is 2-(3-amino-3-carboxypropyl)histidine synthase subunit 2 (DPH2) of Debaryomyces hansenii (strain ATCC 36239 / CBS 767 / BCRC 21394 / JCM 1990 / NBRC 0083 / IGC 2968) (Yeast).